The sequence spans 291 residues: Elongation factor Ts (291 aa).

An involved in Mg(2+) ion dislocation from EF-Tu region spans residues 80-83; that stretch reads TDFV.

It belongs to the EF-Ts family.

The protein resides in the cytoplasm. Associates with the EF-Tu.GDP complex and induces the exchange of GDP to GTP. It remains bound to the aminoacyl-tRNA.EF-Tu.GTP complex up to the GTP hydrolysis stage on the ribosome. The polypeptide is Elongation factor Ts (Limosilactobacillus reuteri (strain DSM 20016) (Lactobacillus reuteri)).